The primary structure comprises 915 residues: Isoleucine--tRNA ligase (915 aa).

The 'HIGH' region motif lies at 58–68 (PYANGHLHIGH). Residue E568 coordinates L-isoleucyl-5'-AMP. Positions 609-613 (KMSKS) match the 'KMSKS' region motif. K612 contributes to the ATP binding site. The Zn(2+) site is built by C892, C895, C907, and C910.

The protein belongs to the class-I aminoacyl-tRNA synthetase family. IleS type 1 subfamily. Monomer. Zn(2+) is required as a cofactor.

The protein resides in the cytoplasm. It catalyses the reaction tRNA(Ile) + L-isoleucine + ATP = L-isoleucyl-tRNA(Ile) + AMP + diphosphate. Functionally, catalyzes the attachment of isoleucine to tRNA(Ile). As IleRS can inadvertently accommodate and process structurally similar amino acids such as valine, to avoid such errors it has two additional distinct tRNA(Ile)-dependent editing activities. One activity is designated as 'pretransfer' editing and involves the hydrolysis of activated Val-AMP. The other activity is designated 'posttransfer' editing and involves deacylation of mischarged Val-tRNA(Ile). The chain is Isoleucine--tRNA ligase from Wolinella succinogenes (strain ATCC 29543 / DSM 1740 / CCUG 13145 / JCM 31913 / LMG 7466 / NCTC 11488 / FDC 602W) (Vibrio succinogenes).